The sequence spans 162 residues: MSSSEVNKVFTEEQEALVVKAWAVMKKNSAELGLQFFLKIFEIAPSAKNLFSYLKDSPVPLEQNPKLKPHATTVFVMTCESAVQLRKAGKATVKESDLKRIGAIHFKTGVVNEHFEVTRFALLETIKEAVPEMWSPEMKNAWGVAYDQLVAAIKFEMKPSST.

N-acetylserine is present on serine 2. Residues 9–158 (VFTEEQEALV…LVAAIKFEMK (150 aa)) enclose the Globin domain. The Homodimerization signature appears at 42–46 (EIAPS). Heme b contacts are provided by serine 52, lysine 66, histidine 70, arginine 100, and histidine 105. The short motif at 112 to 124 (NEHFEVTRFALLE) is the Homodimerization element.

The protein belongs to the plant globin family. Homodimer with distinct heme coordination in each subunits. The cofactor is heme b. In terms of tissue distribution, root nodules.

It localises to the cytoplasm. Its subcellular location is the nucleus. The catalysed reaction is Fe(III)-heme b-[protein] + nitric oxide + H2O = Fe(II)-heme b-[protein] + nitrite + 2 H(+). Phytoglobin that reduces nitrite to nitric oxide (NO) under anoxic conditions (e.g. during flooding or in waterlogged soil) and upon root nodulation. Required for general plant development and during nodulation, especially for the onset of symbiosis. Monitors nitric oxide (NO) levels during early phase of the nitrogen-fixing symbiosis and buffers oxygen in functioning nodules. May not function as an oxygen storage or transport protein. Has an unusually high affinity for O(2) through a hexacoordinate heme iron because of a very low dissociation constant. This Parasponia andersonii (Sponia andersonii) protein is Anaerobic nitrite reductase.